A 127-amino-acid polypeptide reads, in one-letter code: Fluoride-specific ion channel FluC (127 aa).

4 consecutive transmembrane segments (helical) span residues 4–24 (LLLA…LLSM), 35–55 (LGTL…FAWF), 71–91 (TGFC…VFLL), and 103–123 (VFVN…LFSA). Na(+)-binding residues include glycine 75 and threonine 78.

It belongs to the fluoride channel Fluc/FEX (TC 1.A.43) family.

It is found in the cell inner membrane. It carries out the reaction fluoride(in) = fluoride(out). Na(+) is not transported, but it plays an essential structural role and its presence is essential for fluoride channel function. Its function is as follows. Fluoride-specific ion channel. Important for reducing fluoride concentration in the cell, thus reducing its toxicity. This Escherichia coli O17:K52:H18 (strain UMN026 / ExPEC) protein is Fluoride-specific ion channel FluC.